The primary structure comprises 484 residues: Bifunctional protein GlmU (484 aa).

The pyrophosphorylase stretch occupies residues 1 to 240 (MSNPHSSAVI…HRELAGVNDR (240 aa)). UDP-N-acetyl-alpha-D-glucosamine-binding positions include 12 to 15 (LAAG), K26, Q83, and 88 to 89 (GT). D113 provides a ligand contact to Mg(2+). Positions 150, 165, 180, and 238 each coordinate UDP-N-acetyl-alpha-D-glucosamine. N238 lines the Mg(2+) pocket. A linker region spans residues 241 to 261 (VQLAQAGKILNQRLVEDAMRN). Residues 262–484 (GATIVDPDTT…QAHAHETKEG (223 aa)) are N-acetyltransferase. Residues R343 and K361 each coordinate UDP-N-acetyl-alpha-D-glucosamine. H373 (proton acceptor) is an active-site residue. Residues Y376 and N387 each contribute to the UDP-N-acetyl-alpha-D-glucosamine site. Acetyl-CoA contacts are provided by residues A390, 396 to 397 (NY), S415, and A433. Positions 461–484 (EKNRPGTPAADAARQAHAHETKEG) are disordered.

In the N-terminal section; belongs to the N-acetylglucosamine-1-phosphate uridyltransferase family. The protein in the C-terminal section; belongs to the transferase hexapeptide repeat family. As to quaternary structure, homotrimer. Requires Mg(2+) as cofactor.

The protein localises to the cytoplasm. It carries out the reaction alpha-D-glucosamine 1-phosphate + acetyl-CoA = N-acetyl-alpha-D-glucosamine 1-phosphate + CoA + H(+). The enzyme catalyses N-acetyl-alpha-D-glucosamine 1-phosphate + UTP + H(+) = UDP-N-acetyl-alpha-D-glucosamine + diphosphate. Its pathway is nucleotide-sugar biosynthesis; UDP-N-acetyl-alpha-D-glucosamine biosynthesis; N-acetyl-alpha-D-glucosamine 1-phosphate from alpha-D-glucosamine 6-phosphate (route II): step 2/2. It participates in nucleotide-sugar biosynthesis; UDP-N-acetyl-alpha-D-glucosamine biosynthesis; UDP-N-acetyl-alpha-D-glucosamine from N-acetyl-alpha-D-glucosamine 1-phosphate: step 1/1. It functions in the pathway bacterial outer membrane biogenesis; LPS lipid A biosynthesis. In terms of biological role, catalyzes the last two sequential reactions in the de novo biosynthetic pathway for UDP-N-acetylglucosamine (UDP-GlcNAc). The C-terminal domain catalyzes the transfer of acetyl group from acetyl coenzyme A to glucosamine-1-phosphate (GlcN-1-P) to produce N-acetylglucosamine-1-phosphate (GlcNAc-1-P), which is converted into UDP-GlcNAc by the transfer of uridine 5-monophosphate (from uridine 5-triphosphate), a reaction catalyzed by the N-terminal domain. The polypeptide is Bifunctional protein GlmU (Corynebacterium diphtheriae (strain ATCC 700971 / NCTC 13129 / Biotype gravis)).